Consider the following 551-residue polypeptide: Nicotianamine aminotransferase B (551 aa).

The disordered stretch occupies residues 24-127 (KSNGHGVAAA…GHAAAAAEEE (104 aa)). Residues 86-96 (GHRESNGHAEA) show a composition bias toward basic and acidic residues. Positions 111–123 (AANGESNGHAAAA) are enriched in low complexity. N6-(pyridoxal phosphate)lysine is present on lysine 379.

Belongs to the class-I pyridoxal-phosphate-dependent aminotransferase family. The cofactor is pyridoxal 5'-phosphate. As to expression, expressed in roots, but not in leaves.

It catalyses the reaction nicotianamine + 2-oxoglutarate = 3''-deamino-3''-oxonicotianamine + L-glutamate. Its function is as follows. Involved in biosynthesis of mugineic acid family phytosiderophores. The protein is Nicotianamine aminotransferase B of Hordeum vulgare (Barley).